The chain runs to 213 residues: Succinate dehydrogenase subunit 3-1, mitochondrial (213 aa).

The N-terminal 105 residues, 1-105 (MAATALFRSI…LDVGTSKRLF (105 aa)), are a transit peptide targeting the mitochondrion. Position 130 (His130) interacts with heme. A helical membrane pass occupies residues 148-165 (ISGVYLTGVTFAGYLLYL).

As to quaternary structure, component of complex II composed of eight subunits in plants: four classical SDH subunits SDH1, SDH2, SDH3 and SDH4 (a flavoprotein (FP), an iron-sulfur protein (IP), and a cytochrome b composed of a large and a small subunit.), as well as four subunits unknown in mitochondria from bacteria and heterotrophic eukaryotes. Requires heme as cofactor. In terms of tissue distribution, expressed in flowers, inflorescences and stems.

It localises to the mitochondrion inner membrane. It functions in the pathway carbohydrate metabolism; tricarboxylic acid cycle. In terms of biological role, membrane-anchoring subunit of succinate dehydrogenase (SDH). This is Succinate dehydrogenase subunit 3-1, mitochondrial from Arabidopsis thaliana (Mouse-ear cress).